Here is a 203-residue protein sequence, read N- to C-terminus: Small ribosomal subunit protein uS4 (203 aa).

One can recognise an S4 RNA-binding domain in the interval Arg93–Val156.

Belongs to the universal ribosomal protein uS4 family. Part of the 30S ribosomal subunit. Contacts protein S5. The interaction surface between S4 and S5 is involved in control of translational fidelity.

Functionally, one of the primary rRNA binding proteins, it binds directly to 16S rRNA where it nucleates assembly of the body of the 30S subunit. In terms of biological role, with S5 and S12 plays an important role in translational accuracy. This is Small ribosomal subunit protein uS4 from Streptococcus pyogenes serotype M1.